We begin with the raw amino-acid sequence, 351 residues long: Photosystem II D2 protein (351 aa).

Residues 39-59 (CAFLALGGWLTGTTFVTSWYT) traverse the membrane as a helical segment. Histidine 116 serves as a coordination point for chlorophyll a. The chain crosses the membrane as a helical span at residues 123 to 139 (GFMLRQFEIARLVGIRP). Pheophytin a-binding residues include glutamine 128 and asparagine 141. A helical membrane pass occupies residues 151-164 (VFVSVFLMYPLGQS). Histidine 196 serves as a coordination point for chlorophyll a. A helical membrane pass occupies residues 206-226 (GALLCAIHGATVENTLFEDGE). 2 residues coordinate a plastoquinone: histidine 213 and phenylalanine 260. Histidine 213 contributes to the Fe cation binding site. Histidine 267 serves as a coordination point for Fe cation. The helical transmembrane segment at 277-293 (GLWMSAVGIVGLALNLR) threads the bilayer.

This sequence belongs to the reaction center PufL/M/PsbA/D family. In terms of assembly, PSII is composed of 1 copy each of membrane proteins PsbA, PsbB, PsbC, PsbD, PsbE, PsbF, PsbH, PsbI, PsbJ, PsbK, PsbL, PsbM, PsbT, PsbX, PsbY, PsbZ, Psb30/Ycf12, peripheral proteins PsbO, CyanoQ (PsbQ), PsbU, PsbV and a large number of cofactors. It forms dimeric complexes. The D1/D2 heterodimer binds P680, chlorophylls that are the primary electron donor of PSII, and subsequent electron acceptors. It shares a non-heme iron and each subunit binds pheophytin, quinone, additional chlorophylls, carotenoids and lipids. There is also a Cl(-1) ion associated with D1 and D2, which is required for oxygen evolution. The PSII complex binds additional chlorophylls, carotenoids and specific lipids. is required as a cofactor.

Its subcellular location is the cellular thylakoid membrane. It carries out the reaction 2 a plastoquinone + 4 hnu + 2 H2O = 2 a plastoquinol + O2. Photosystem II (PSII) is a light-driven water:plastoquinone oxidoreductase that uses light energy to abstract electrons from H(2)O, generating O(2) and a proton gradient subsequently used for ATP formation. It consists of a core antenna complex that captures photons, and an electron transfer chain that converts photonic excitation into a charge separation. The D1/D2 (PsbA/PsbD) reaction center heterodimer binds P680, the primary electron donor of PSII as well as several subsequent electron acceptors. D2 is needed for assembly of a stable PSII complex. The sequence is that of Photosystem II D2 protein from Nostoc sp. (strain PCC 7120 / SAG 25.82 / UTEX 2576).